The following is a 241-amino-acid chain: Pyridoxine 5'-phosphate synthase (241 aa).

Asparagine 7 contacts 3-amino-2-oxopropyl phosphate. 9–10 serves as a coordination point for 1-deoxy-D-xylulose 5-phosphate; the sequence is DH. Residue arginine 18 coordinates 3-amino-2-oxopropyl phosphate. The active-site Proton acceptor is the histidine 43. 1-deoxy-D-xylulose 5-phosphate is bound by residues arginine 45 and histidine 50. Glutamate 70 acts as the Proton acceptor in catalysis. Position 100 (threonine 100) interacts with 1-deoxy-D-xylulose 5-phosphate. Histidine 191 acts as the Proton donor in catalysis. 3-amino-2-oxopropyl phosphate is bound by residues glycine 192 and 213–214; that span reads GH.

The protein belongs to the PNP synthase family. In terms of assembly, homooctamer; tetramer of dimers.

The protein localises to the cytoplasm. The enzyme catalyses 3-amino-2-oxopropyl phosphate + 1-deoxy-D-xylulose 5-phosphate = pyridoxine 5'-phosphate + phosphate + 2 H2O + H(+). It participates in cofactor biosynthesis; pyridoxine 5'-phosphate biosynthesis; pyridoxine 5'-phosphate from D-erythrose 4-phosphate: step 5/5. Functionally, catalyzes the complicated ring closure reaction between the two acyclic compounds 1-deoxy-D-xylulose-5-phosphate (DXP) and 3-amino-2-oxopropyl phosphate (1-amino-acetone-3-phosphate or AAP) to form pyridoxine 5'-phosphate (PNP) and inorganic phosphate. This Nostoc punctiforme (strain ATCC 29133 / PCC 73102) protein is Pyridoxine 5'-phosphate synthase.